The primary structure comprises 284 residues: ATP synthase subunit a (284 aa).

Helical transmembrane passes span 55–75 (AIHV…LGLF), 116–136 (IAPL…LKLI), 165–185 (FGMS…VKGV), 196–216 (PFNH…ALII), 234–254 (VVFI…NVPW), and 255–275 (AIFH…LTVV).

This sequence belongs to the ATPase A chain family. F-type ATPases have 2 components, CF(1) - the catalytic core - and CF(0) - the membrane proton channel. CF(1) has five subunits: alpha(3), beta(3), gamma(1), delta(1), epsilon(1). CF(0) has three main subunits: a(1), b(2) and c(9-12). The alpha and beta chains form an alternating ring which encloses part of the gamma chain. CF(1) is attached to CF(0) by a central stalk formed by the gamma and epsilon chains, while a peripheral stalk is formed by the delta and b chains.

It is found in the cell inner membrane. Key component of the proton channel; it plays a direct role in the translocation of protons across the membrane. The protein is ATP synthase subunit a of Marinobacter nauticus (strain ATCC 700491 / DSM 11845 / VT8) (Marinobacter aquaeolei).